Reading from the N-terminus, the 162-residue chain is Phosphopantetheine adenylyltransferase (162 aa).

Substrate is bound at residue T10. ATP is bound by residues 10 to 11 (TF) and H18. K42, L74, and R88 together coordinate substrate. ATP contacts are provided by residues 89–91 (GLR), E99, and 124–130 (FSCISST).

It belongs to the bacterial CoaD family. As to quaternary structure, homohexamer. Requires Mg(2+) as cofactor.

Its subcellular location is the cytoplasm. It catalyses the reaction (R)-4'-phosphopantetheine + ATP + H(+) = 3'-dephospho-CoA + diphosphate. The protein operates within cofactor biosynthesis; coenzyme A biosynthesis; CoA from (R)-pantothenate: step 4/5. Functionally, reversibly transfers an adenylyl group from ATP to 4'-phosphopantetheine, yielding dephospho-CoA (dPCoA) and pyrophosphate. This chain is Phosphopantetheine adenylyltransferase, found in Francisella tularensis subsp. novicida (strain U112).